A 377-amino-acid polypeptide reads, in one-letter code: Odorant receptor 30a (377 aa).

Residues 1–34 (MELKSMDPVEMPIFGSTLKLMKFWSYLFVHNWRR) lie on the Cytoplasmic side of the membrane. The helical transmembrane segment at 35–55 (YVAMTPYIIINCTQYVDIYLS) threads the bilayer. Topologically, residues 56-65 (TESLDFIIRN) are extracellular. A helical transmembrane segment spans residues 66–86 (VYLAVLFTNTVVRGVLLCVQR). The Cytoplasmic segment spans residues 87 to 127 (FSYERFINILKSFYIELLQSDDPIINILVKETTRLSVLISR). The helical transmembrane segment at 128–148 (INLLMGCCTCIGFVTYPIFGS) threads the bilayer. Residues 149–172 (ERVLPYGMYLPTIDEYKYASPYYE) lie on the Extracellular side of the membrane. The helical transmembrane segment at 173-193 (IFFVIQAIMAPMGCCMYIPYT) threads the bilayer. The Cytoplasmic portion of the chain corresponds to 194–254 (NMVVTFTLFA…SMNALNTHLH (61 aa)). A helical membrane pass occupies residues 255 to 275 (LVEFLCFGAMLCVLLFSLIIA). Residues 276–280 (QTIAQ) lie on the Extracellular side of the membrane. A helical transmembrane segment spans residues 281–301 (TVIVIAYMVMIFANSVVLYYV). Residues 302–344 (ANELYFQSFDIAIAAYESNWMDFDVDTQKTLKFLIMRSQKPLA) are Cytoplasmic-facing. The helical transmembrane segment at 345–365 (ILVGGTYPMNLKMLQSLLNAI) threads the bilayer. Residues 366-377 (YSFFTLLRRVYG) are Extracellular-facing.

This sequence belongs to the insect chemoreceptor superfamily. Heteromeric odorant receptor channel (TC 1.A.69) family. Or30a subfamily. In terms of assembly, interacts with Orco. Complexes exist early in the endomembrane system in olfactory sensory neurons (OSNs), coupling these complexes to the conserved ciliary trafficking pathway.

It is found in the cell membrane. Functionally, odorant receptor which mediates acceptance or avoidance behavior, depending on its substrates. The odorant receptor repertoire encodes a large collection of odor stimuli that vary widely in identity, intensity, and duration. May form a complex with Orco to form odorant-sensing units, providing sensitive and prolonged odorant signaling and calcium permeability. Involved in the behavioral responses to propyl acetate and anisole. This chain is Odorant receptor 30a (Or30a), found in Drosophila melanogaster (Fruit fly).